A 105-amino-acid polypeptide reads, in one-letter code: Large ribosomal subunit protein bL21 (105 aa).

This sequence belongs to the bacterial ribosomal protein bL21 family. Part of the 50S ribosomal subunit. Contacts protein L20.

In terms of biological role, this protein binds to 23S rRNA in the presence of protein L20. The chain is Large ribosomal subunit protein bL21 from Rickettsia africae (strain ESF-5).